Reading from the N-terminus, the 385-residue chain is 1-deoxy-D-xylulose 5-phosphate reductoisomerase (385 aa).

NADPH contacts are provided by Thr-11, Gly-12, Ser-13, Ile-14, Asn-39, and Asn-123. Lys-124 contributes to the 1-deoxy-D-xylulose 5-phosphate binding site. Glu-125 serves as a coordination point for NADPH. Asp-149 provides a ligand contact to Mn(2+). 1-deoxy-D-xylulose 5-phosphate-binding residues include Ser-150, Glu-151, Ser-174, and His-197. Glu-151 lines the Mn(2+) pocket. An NADPH-binding site is contributed by Gly-203. Positions 210, 215, 216, and 219 each coordinate 1-deoxy-D-xylulose 5-phosphate. Glu-219 serves as a coordination point for Mn(2+).

This sequence belongs to the DXR family. The cofactor is Mg(2+). It depends on Mn(2+) as a cofactor.

It catalyses the reaction 2-C-methyl-D-erythritol 4-phosphate + NADP(+) = 1-deoxy-D-xylulose 5-phosphate + NADPH + H(+). Its pathway is isoprenoid biosynthesis; isopentenyl diphosphate biosynthesis via DXP pathway; isopentenyl diphosphate from 1-deoxy-D-xylulose 5-phosphate: step 1/6. Its function is as follows. Catalyzes the NADPH-dependent rearrangement and reduction of 1-deoxy-D-xylulose-5-phosphate (DXP) to 2-C-methyl-D-erythritol 4-phosphate (MEP). In Porphyromonas gingivalis (strain ATCC 33277 / DSM 20709 / CIP 103683 / JCM 12257 / NCTC 11834 / 2561), this protein is 1-deoxy-D-xylulose 5-phosphate reductoisomerase.